The chain runs to 356 residues: MAKIVVIGAGVAGLTTALQLLRKGHEVTIVSEFTPGDLSIGYTSPWAGANWLTFYDGGKLADYDAVSYPILRELARSSPEAGIRLISQRSHVLKRDLPKLEVAMSAICQRNPWFKNTVDSFEIIEDRSRIVHDDVAYLVEFRSVCIHTGVYLNWLMSQCLSLGATVVKRRVNHIKDANLLHSSGSRPDVIVNCSGLFARFLGGVEDKKMYPIRGQVVLVRNSLPFMASFSSTPEKENEDEALYIMTRFDGTSIIGGCFQPNNWSSEPDPSLTHRILSRALDRFPELTKDGPLDIVRECVGHRPGREGGPRVELEKIPGVGFVVHNYGAAGAGYQSSYGMADEAVSYVERALTRPNL.

A signal peptide spans Met1 to Ala17. FAD-binding residues include Ala9, Ser44, Gly48, and Asn50. Phe54 serves as a coordination point for anthranilate. Residue Val171 coordinates FAD. A glycan (N-linked (GlcNAc...) asparagine) is linked at Asn192. Tyr243 lines the anthranilate pocket. Tyr243 contacts (R)-lactate. N-linked (GlcNAc...) asparagine glycosylation occurs at Asn262. 5 residues coordinate FAD: Arg302, Ala329, Gly332, Tyr333, and Gln334. Arg302 lines the anthranilate pocket. Arg302 is a (R)-lactate binding site.

It belongs to the DAMOX/DASOX family. The cofactor is FAD.

It localises to the peroxisome matrix. It carries out the reaction a D-alpha-amino acid + O2 + H2O = a 2-oxocarboxylate + H2O2 + NH4(+). It catalyses the reaction D-alanine + O2 + H2O = pyruvate + H2O2 + NH4(+). The enzyme catalyses D-serine + O2 + H2O = 3-hydroxypyruvate + H2O2 + NH4(+). The catalysed reaction is D-phenylalanine + O2 + H2O = 3-phenylpyruvate + H2O2 + NH4(+). It carries out the reaction D-lysine + O2 + H2O = 6-amino-2-oxohexanoate + H2O2 + NH4(+). It catalyses the reaction D-tyrosine + O2 + H2O = 3-(4-hydroxyphenyl)pyruvate + H2O2 + NH4(+). The enzyme catalyses D-methionine + O2 + H2O = 4-methylsulfanyl-2-oxobutanoate + H2O2 + NH4(+). The catalysed reaction is D-tryptophan + O2 + H2O = indole-3-pyruvate + H2O2 + NH4(+). It carries out the reaction D-leucine + O2 + H2O = 4-methyl-2-oxopentanoate + H2O2 + NH4(+). It catalyses the reaction D-valine + O2 + H2O = 3-methyl-2-oxobutanoate + H2O2 + NH4(+). Its activity is regulated as follows. Inhibited by benzoate and hypochlorite. In terms of biological role, catalyzes the oxidative deamination of D-amino acids with broad substrate specificity. Enables the organism to utilize D-amino acids as a source of nutrients. The sequence is that of D-amino-acid oxidase from Trigonopsis variabilis (Yeast).